The primary structure comprises 385 residues: tRNA-specific 2-thiouridylase MnmA (385 aa).

ATP contacts are provided by residues 8–15 and Leu-34; that span reads AMSGGVDS. The Nucleophile role is filled by Cys-102. The cysteines at positions 102 and 200 are disulfide-linked. Residue Gly-126 participates in ATP binding. The tract at residues 150 to 152 is interaction with tRNA; the sequence is KDQ. The active-site Cysteine persulfide intermediate is the Cys-200. The segment at 307–308 is interaction with tRNA; that stretch reads RY.

This sequence belongs to the MnmA/TRMU family.

The protein localises to the cytoplasm. It catalyses the reaction S-sulfanyl-L-cysteinyl-[protein] + uridine(34) in tRNA + AH2 + ATP = 2-thiouridine(34) in tRNA + L-cysteinyl-[protein] + A + AMP + diphosphate + H(+). Catalyzes the 2-thiolation of uridine at the wobble position (U34) of tRNA, leading to the formation of s(2)U34. The chain is tRNA-specific 2-thiouridylase MnmA from Heliobacterium modesticaldum (strain ATCC 51547 / Ice1).